The chain runs to 356 residues: Phosphoribosyl pyrophosphate synthase-associated protein 1 (356 aa).

Residue M1 is modified to N-acetylmethionine. Phosphoserine occurs at positions 177 and 215.

This sequence belongs to the ribose-phosphate pyrophosphokinase family. As to quaternary structure, binds to PRPS1 and PRPS2. As to expression, ubiquitous.

Seems to play a negative regulatory role in 5-phosphoribose 1-diphosphate synthesis. This Rattus norvegicus (Rat) protein is Phosphoribosyl pyrophosphate synthase-associated protein 1 (Prpsap1).